Here is a 370-residue protein sequence, read N- to C-terminus: Lysophosphatidic acid receptor 4 (370 aa).

Residues 1–43 (MGDRRFIDFQFQDSNSSLRPRLGNATANNTCIVDDSFKYNLNG) are Extracellular-facing. 3 N-linked (GlcNAc...) asparagine glycosylation sites follow: Asn-15, Asn-24, and Asn-28. Residues 44-64 (AVYSVVFILGLITNSVSLFVF) form a helical membrane-spanning segment. Residues 65-73 (CFRMKMRSE) lie on the Cytoplasmic side of the membrane. Residues 74-94 (TAIFITNLAVSDLLFVCTLPF) traverse the membrane as a helical segment. Over 95–112 (KIFYNFNRHWPFGDTLCK) the chain is Extracellular. An intrachain disulfide couples Cys-111 to Cys-188. A helical membrane pass occupies residues 113-133 (ISGTAFLTNIYGSMLFLTCIS). Residues 134–155 (VDRFLAIVYPFRSRTIRTRRNS) are Cytoplasmic-facing. The chain crosses the membrane as a helical span at residues 156–176 (AIVCAGVWILVLSGGISASLF). Topologically, residues 177-203 (STTNVNNATTTCFEGFSKRVWKTYLSK) are extracellular. A glycan (N-linked (GlcNAc...) asparagine) is linked at Asn-183. Residues 204 to 224 (ITIFIEVVGFIIPLILNVSCS) form a helical membrane-spanning segment. Residues 225 to 254 (SVVLRTLRKPATLSQIGTNKKKVLKMITVH) lie on the Cytoplasmic side of the membrane. The chain crosses the membrane as a helical span at residues 255-275 (MAVFVVCFVPYNSVLFLYALV). The Extracellular segment spans residues 276 to 294 (RSQAITNCFLERFAKIMYP). The helical transmembrane segment at 295 to 315 (ITLCLATLNCCFDPFIYYFTL) threads the bilayer. The Cytoplasmic portion of the chain corresponds to 316–370 (ESFQKSFYINAHIRMESLFKTETPLTTKPSLPAIQEEVSDQTTNNGGELMLESTF).

The protein belongs to the G-protein coupled receptor 1 family. As to expression, high expression in ovary. Not detected in the brain regions thalamus, putamen, caudate, frontal cortex, pons, hypothalamus and hippocampus.

Its subcellular location is the cell membrane. Its function is as follows. Receptor for lysophosphatidic acid (LPA), a mediator of diverse cellular activities. Transduces a signal by increasing the intracellular calcium ions and by stimulating adenylyl cyclase activity. The rank order of potency for agonists of this receptor is 1-oleoyl- &gt; 1-stearoyl- &gt; 1-palmitoyl- &gt; 1-myristoyl- &gt; 1-alkyl- &gt; 1-alkenyl-LPA. This is Lysophosphatidic acid receptor 4 (LPAR4) from Homo sapiens (Human).